Consider the following 166-residue polypeptide: NADPH-dependent 7-cyano-7-deazaguanine reductase (166 aa).

Cysteine 57 acts as the Thioimide intermediate in catalysis. Aspartate 64 functions as the Proton donor in the catalytic mechanism. Residues 79–81 (VES) and 98–99 (HE) contribute to the substrate site.

It belongs to the GTP cyclohydrolase I family. QueF type 1 subfamily.

It localises to the cytoplasm. The catalysed reaction is 7-aminomethyl-7-carbaguanine + 2 NADP(+) = 7-cyano-7-deazaguanine + 2 NADPH + 3 H(+). It functions in the pathway tRNA modification; tRNA-queuosine biosynthesis. In terms of biological role, catalyzes the NADPH-dependent reduction of 7-cyano-7-deazaguanine (preQ0) to 7-aminomethyl-7-deazaguanine (preQ1). The sequence is that of NADPH-dependent 7-cyano-7-deazaguanine reductase from Staphylococcus aureus (strain MRSA252).